The following is a 401-amino-acid chain: tRNA(Ile)-lysidine synthase (401 aa).

Residue 17–22 (SGGPDS) participates in ATP binding.

This sequence belongs to the tRNA(Ile)-lysidine synthase family.

The protein resides in the cytoplasm. It catalyses the reaction cytidine(34) in tRNA(Ile2) + L-lysine + ATP = lysidine(34) in tRNA(Ile2) + AMP + diphosphate + H(+). Its function is as follows. Ligates lysine onto the cytidine present at position 34 of the AUA codon-specific tRNA(Ile) that contains the anticodon CAU, in an ATP-dependent manner. Cytidine is converted to lysidine, thus changing the amino acid specificity of the tRNA from methionine to isoleucine. The chain is tRNA(Ile)-lysidine synthase from Mycoplasma mycoides subsp. mycoides SC (strain CCUG 32753 / NCTC 10114 / PG1).